Consider the following 126-residue polypeptide: Small ribosomal subunit protein uS13 (126 aa).

Residues 98-126 (PVRGQSTKNNARTRKGRKKTVANKKKATK) form a disordered region. Residues 108-126 (ARTRKGRKKTVANKKKATK) show a composition bias toward basic residues.

It belongs to the universal ribosomal protein uS13 family. Part of the 30S ribosomal subunit. Forms a loose heterodimer with protein S19. Forms two bridges to the 50S subunit in the 70S ribosome.

In terms of biological role, located at the top of the head of the 30S subunit, it contacts several helices of the 16S rRNA. In the 70S ribosome it contacts the 23S rRNA (bridge B1a) and protein L5 of the 50S subunit (bridge B1b), connecting the 2 subunits; these bridges are implicated in subunit movement. Contacts the tRNAs in the A and P-sites. The protein is Small ribosomal subunit protein uS13 of Bacteroides fragilis (strain ATCC 25285 / DSM 2151 / CCUG 4856 / JCM 11019 / LMG 10263 / NCTC 9343 / Onslow / VPI 2553 / EN-2).